Consider the following 412-residue polypeptide: Subtilisin-like protease 6 (412 aa).

An N-terminal signal peptide occupies residues M1–G20. A propeptide spanning residues A21 to L127 is cleaved from the precursor. One can recognise an Inhibitor I9 domain in the interval K36–A120. N123 and N126 each carry an N-linked (GlcNAc...) asparagine glycan. The Peptidase S8 domain occupies S135 to K412. Catalysis depends on charge relay system residues D167 and H198. Residues N252, N264, and N325 are each glycosylated (N-linked (GlcNAc...) asparagine). The active-site Charge relay system is the S358. The N-linked (GlcNAc...) asparagine glycan is linked to N408.

The protein belongs to the peptidase S8 family.

The protein resides in the secreted. In terms of biological role, secreted subtilisin-like serine protease with keratinolytic activity that contributes to pathogenicity. The chain is Subtilisin-like protease 6 (SUB6) from Trichophyton verrucosum (Cattle ringworm fungus).